The chain runs to 394 residues: Aspergillopepsin-1 (394 aa).

Positions 1–20 (MVVFSKVTAAVFGLATIASA) are cleaved as a signal peptide. The propeptide at 21–69 (APAPPTRKGFTVQQQARPAQKKQVNLPAMYAHALTKFGGSVPESVKVAA) is activation peptide. The Peptidase A1 domain maps to 85-391 (YLTPVNVGGT…DSEGPRLGFA (307 aa)). Active-site residues include Asp-101 and Asp-283. Residues Cys-319 and Cys-354 are joined by a disulfide bond.

Belongs to the peptidase A1 family. In terms of assembly, monomer.

Its subcellular location is the secreted. It carries out the reaction Hydrolysis of proteins with broad specificity. Generally favors hydrophobic residues in P1 and P1', but also accepts Lys in P1, which leads to activation of trypsinogen. Does not clot milk.. Functionally, secreted aspartic endopeptidase that allows assimilation of proteinaceous substrates. The scissile peptide bond is attacked by a nucleophilic water molecule activated by two aspartic residues in the active site. Shows a broad primary substrate specificity. Favors hydrophobic residues at the P1 and P1' positions, but also accepts a lysine residue in the P1 position, leading to the activation of trypsinogen and chymotrypsinogen A. In Aspergillus clavatus (strain ATCC 1007 / CBS 513.65 / DSM 816 / NCTC 3887 / NRRL 1 / QM 1276 / 107), this protein is Aspergillopepsin-1 (pepA).